Consider the following 45-residue polypeptide: Photosystem II reaction center protein K (45 aa).

A propeptide spanning residues 1-8 (MLMSLFLA) is cleaved from the precursor. A helical transmembrane segment spans residues 23–43 (ILPIIPLFFLLLAFVWQAAIG).

The protein belongs to the PsbK family. As to quaternary structure, PSII is composed of 1 copy each of membrane proteins PsbA, PsbB, PsbC, PsbD, PsbE, PsbF, PsbH, PsbI, PsbJ, PsbK, PsbL, PsbM, PsbT, PsbX, PsbY, PsbZ, Psb30/Ycf12, at least 3 peripheral proteins of the oxygen-evolving complex and a large number of cofactors. It forms dimeric complexes.

Its subcellular location is the plastid. It is found in the cyanelle thylakoid membrane. In terms of biological role, one of the components of the core complex of photosystem II (PSII). PSII is a light-driven water:plastoquinone oxidoreductase that uses light energy to abstract electrons from H(2)O, generating O(2) and a proton gradient subsequently used for ATP formation. It consists of a core antenna complex that captures photons, and an electron transfer chain that converts photonic excitation into a charge separation. This chain is Photosystem II reaction center protein K, found in Cyanophora paradoxa.